Here is a 475-residue protein sequence, read N- to C-terminus: tRNA-2-methylthio-N(6)-dimethylallyladenosine synthase (475 aa).

In terms of domain architecture, MTTase N-terminal spans 3–120; that stretch reads KKLHIKTWGC…LPEMIDQIRA (118 aa). 6 residues coordinate [4Fe-4S] cluster: Cys12, Cys49, Cys83, Cys157, Cys161, and Cys164. The Radical SAM core domain occupies 143–375; that stretch reads RADGPSAFVS…QDRITQQAMR (233 aa). One can recognise a TRAM domain in the interval 378-441; sequence RQMVGTVQRI…TNSLRGVFIR (64 aa).

Belongs to the methylthiotransferase family. MiaB subfamily. As to quaternary structure, monomer. The cofactor is [4Fe-4S] cluster.

It is found in the cytoplasm. The catalysed reaction is N(6)-dimethylallyladenosine(37) in tRNA + (sulfur carrier)-SH + AH2 + 2 S-adenosyl-L-methionine = 2-methylsulfanyl-N(6)-dimethylallyladenosine(37) in tRNA + (sulfur carrier)-H + 5'-deoxyadenosine + L-methionine + A + S-adenosyl-L-homocysteine + 2 H(+). Catalyzes the methylthiolation of N6-(dimethylallyl)adenosine (i(6)A), leading to the formation of 2-methylthio-N6-(dimethylallyl)adenosine (ms(2)i(6)A) at position 37 in tRNAs that read codons beginning with uridine. The protein is tRNA-2-methylthio-N(6)-dimethylallyladenosine synthase of Shewanella halifaxensis (strain HAW-EB4).